Reading from the N-terminus, the 183-residue chain is Adenine phosphoribosyltransferase (183 aa).

The protein belongs to the purine/pyrimidine phosphoribosyltransferase family. As to quaternary structure, homodimer.

Its subcellular location is the cytoplasm. It carries out the reaction AMP + diphosphate = 5-phospho-alpha-D-ribose 1-diphosphate + adenine. It functions in the pathway purine metabolism; AMP biosynthesis via salvage pathway; AMP from adenine: step 1/1. Its function is as follows. Catalyzes a salvage reaction resulting in the formation of AMP, that is energically less costly than de novo synthesis. The protein is Adenine phosphoribosyltransferase of Sodalis glossinidius (strain morsitans).